A 527-amino-acid polypeptide reads, in one-letter code: Coiled-coil domain-containing protein 148 (527 aa).

Coiled coils occupy residues 289–353 and 401–438; these read LAKD…TEIK and LEKR…VAVQ.

In Mus musculus (Mouse), this protein is Coiled-coil domain-containing protein 148 (Ccdc148).